A 338-amino-acid polypeptide reads, in one-letter code: Large ribosomal subunit protein uL3 (338 aa).

Residues 230-253 (HRKGHRRTGTIGPQAPALMFTQPR) form a disordered region.

It belongs to the universal ribosomal protein uL3 family. As to quaternary structure, part of the 50S ribosomal subunit. Forms a cluster with proteins L14 and L24e.

One of the primary rRNA binding proteins, it binds directly near the 3'-end of the 23S rRNA, where it nucleates assembly of the 50S subunit. The chain is Large ribosomal subunit protein uL3 from Pyrobaculum neutrophilum (strain DSM 2338 / JCM 9278 / NBRC 100436 / V24Sta) (Thermoproteus neutrophilus).